Reading from the N-terminus, the 200-residue chain is MKIGIIAYQGSFEEHYLQLKRAFDKLSINGEITPVKIPKDLKDIDGVIIPGGESTTIGLVAKRLGILDELKEKITSGLPVMGTCAGAIMLAKEVSDAKVGKTSQPLIGAMNISIIRNYYGRQRESFEAIIDLSKIGKGKANVVFIRAPAITKLWGKAQSLAELNGVTVLAEENNILATTFHPELSDTTSIHEYFLHLVKG.

52-54 provides a ligand contact to L-glutamine; sequence GES. Residue Cys84 is the Nucleophile of the active site. Residues Arg116 and 145-146 contribute to the L-glutamine site; that span reads IR. Residues His181 and Glu183 each act as charge relay system in the active site.

It belongs to the glutaminase PdxT/SNO family. As to quaternary structure, in the presence of PdxS, forms a dodecamer of heterodimers. Only shows activity in the heterodimer.

It carries out the reaction aldehydo-D-ribose 5-phosphate + D-glyceraldehyde 3-phosphate + L-glutamine = pyridoxal 5'-phosphate + L-glutamate + phosphate + 3 H2O + H(+). The catalysed reaction is L-glutamine + H2O = L-glutamate + NH4(+). It functions in the pathway cofactor biosynthesis; pyridoxal 5'-phosphate biosynthesis. Functionally, catalyzes the hydrolysis of glutamine to glutamate and ammonia as part of the biosynthesis of pyridoxal 5'-phosphate. The resulting ammonia molecule is channeled to the active site of PdxS. The sequence is that of Pyridoxal 5'-phosphate synthase subunit PdxT from Saccharolobus islandicus (strain M.16.27) (Sulfolobus islandicus).